Reading from the N-terminus, the 225-residue chain is Deoxyribose-phosphate aldolase (225 aa).

Aspartate 94 functions as the Proton donor/acceptor in the catalytic mechanism. The active-site Schiff-base intermediate with acetaldehyde is lysine 158. Lysine 187 functions as the Proton donor/acceptor in the catalytic mechanism.

Belongs to the DeoC/FbaB aldolase family. DeoC type 1 subfamily.

It localises to the cytoplasm. It catalyses the reaction 2-deoxy-D-ribose 5-phosphate = D-glyceraldehyde 3-phosphate + acetaldehyde. The protein operates within carbohydrate degradation; 2-deoxy-D-ribose 1-phosphate degradation; D-glyceraldehyde 3-phosphate and acetaldehyde from 2-deoxy-alpha-D-ribose 1-phosphate: step 2/2. Catalyzes a reversible aldol reaction between acetaldehyde and D-glyceraldehyde 3-phosphate to generate 2-deoxy-D-ribose 5-phosphate. The chain is Deoxyribose-phosphate aldolase from Thermococcus gammatolerans (strain DSM 15229 / JCM 11827 / EJ3).